Here is a 184-residue protein sequence, read N- to C-terminus: uncharacterized protein (184 aa).

The tract at residues 32–52 (PCPRSRTQGQSRRSETHTISR) is disordered.

It localises to the mitochondrion. This is an uncharacterized protein from Arabidopsis thaliana (Mouse-ear cress).